Consider the following 243-residue polypeptide: tRNA (guanine-N(1)-)-methyltransferase (243 aa).

S-adenosyl-L-methionine-binding positions include G108 and 127 to 132 (LGDYVL).

The protein belongs to the RNA methyltransferase TrmD family. As to quaternary structure, homodimer.

It localises to the cytoplasm. It catalyses the reaction guanosine(37) in tRNA + S-adenosyl-L-methionine = N(1)-methylguanosine(37) in tRNA + S-adenosyl-L-homocysteine + H(+). Specifically methylates guanosine-37 in various tRNAs. The chain is tRNA (guanine-N(1)-)-methyltransferase from Streptococcus gordonii (strain Challis / ATCC 35105 / BCRC 15272 / CH1 / DL1 / V288).